Reading from the N-terminus, the 262-residue chain is Phosphatidylglycerol--prolipoprotein diacylglyceryl transferase 1 (262 aa).

A run of 4 helical transmembrane segments spans residues 15–35 (WYGI…SINA), 40–60 (LNFD…IIGA), 83–103 (QGGL…FIYC), and 108–128 (VDFL…QGIG). A 1,2-diacyl-sn-glycero-3-phospho-(1'-sn-glycerol) is bound at residue R129. A run of 3 helical transmembrane segments spans residues 169–189 (TFLY…IILY), 197–217 (GVVI…IEGL), and 229–249 (VAQL…IIIV).

This sequence belongs to the Lgt family.

It localises to the cell membrane. The catalysed reaction is L-cysteinyl-[prolipoprotein] + a 1,2-diacyl-sn-glycero-3-phospho-(1'-sn-glycerol) = an S-1,2-diacyl-sn-glyceryl-L-cysteinyl-[prolipoprotein] + sn-glycerol 1-phosphate + H(+). It participates in protein modification; lipoprotein biosynthesis (diacylglyceryl transfer). Catalyzes the transfer of the diacylglyceryl group from phosphatidylglycerol to the sulfhydryl group of the N-terminal cysteine of a prolipoprotein, the first step in the formation of mature lipoproteins. The sequence is that of Phosphatidylglycerol--prolipoprotein diacylglyceryl transferase 1 from Clostridium perfringens (strain 13 / Type A).